The primary structure comprises 247 residues: RNA polymerase sigma factor FliA (247 aa).

The sigma-70 factor domain-2 stretch occupies residues 22-94 (LIQRYAPLVK…MLDEVRKGDW (73 aa)). The Interaction with polymerase core subunit RpoC signature appears at 49-52 (DLMQ). The segment at 102–171 (NTRMVTDAIR…GLPEDTSLSH (70 aa)) is sigma-70 factor domain-3. A sigma-70 factor domain-4 region spans residues 190–238 (AIAKLPERERLVLALYYDEELNLKEIGEVLGVSESRVSQLHSQCAARLR). The segment at residues 212–231 (LKEIGEVLGVSESRVSQLHS) is a DNA-binding region (H-T-H motif).

This sequence belongs to the sigma-70 factor family. FliA subfamily.

It is found in the cytoplasm. Its function is as follows. Sigma factors are initiation factors that promote the attachment of RNA polymerase to specific initiation sites and are then released. This sigma factor controls the expression of flagella-related genes. Required for the flagellin gene (fliC) expression. The protein is RNA polymerase sigma factor FliA of Pseudomonas aeruginosa (strain ATCC 15692 / DSM 22644 / CIP 104116 / JCM 14847 / LMG 12228 / 1C / PRS 101 / PAO1).